The chain runs to 193 residues: Pyridoxal 5'-phosphate synthase subunit PdxT (193 aa).

50-52 (GES) contributes to the L-glutamine binding site. The Nucleophile role is filled by cysteine 82. Residues arginine 109 and 136 to 137 (IR) contribute to the L-glutamine site. Active-site charge relay system residues include histidine 172 and glutamate 174.

It belongs to the glutaminase PdxT/SNO family. As to quaternary structure, in the presence of PdxS, forms a dodecamer of heterodimers. Only shows activity in the heterodimer.

The catalysed reaction is aldehydo-D-ribose 5-phosphate + D-glyceraldehyde 3-phosphate + L-glutamine = pyridoxal 5'-phosphate + L-glutamate + phosphate + 3 H2O + H(+). The enzyme catalyses L-glutamine + H2O = L-glutamate + NH4(+). Its pathway is cofactor biosynthesis; pyridoxal 5'-phosphate biosynthesis. Catalyzes the hydrolysis of glutamine to glutamate and ammonia as part of the biosynthesis of pyridoxal 5'-phosphate. The resulting ammonia molecule is channeled to the active site of PdxS. The polypeptide is Pyridoxal 5'-phosphate synthase subunit PdxT (Streptococcus pneumoniae (strain JJA)).